Here is a 68-residue protein sequence, read N- to C-terminus: Large ribosomal subunit protein uL30 (68 aa).

It belongs to the universal ribosomal protein uL30 family. Part of the 50S ribosomal subunit.

This is Large ribosomal subunit protein uL30 from Paenarthrobacter aurescens (strain TC1).